The following is a 98-amino-acid chain: Acylphosphatase (98 aa).

One can recognise an Acylphosphatase-like domain in the interval 12–98 (TYYVRVRGVV…ERRFDRFQQQ (87 aa)). Catalysis depends on residues R27 and N45.

The protein belongs to the acylphosphatase family.

It carries out the reaction an acyl phosphate + H2O = a carboxylate + phosphate + H(+). This chain is Acylphosphatase (acyP), found in Burkholderia ambifaria (strain ATCC BAA-244 / DSM 16087 / CCUG 44356 / LMG 19182 / AMMD) (Burkholderia cepacia (strain AMMD)).